The sequence spans 416 residues: Serine hydroxymethyltransferase 1 (416 aa).

Residues leucine 121 and 125–127 (GHL) contribute to the (6S)-5,6,7,8-tetrahydrofolate site. Lysine 229 is modified (N6-(pyridoxal phosphate)lysine). (6S)-5,6,7,8-tetrahydrofolate-binding positions include glutamate 245 and 354–356 (SPF).

This sequence belongs to the SHMT family. In terms of assembly, homodimer. The cofactor is pyridoxal 5'-phosphate.

It is found in the cytoplasm. It carries out the reaction (6R)-5,10-methylene-5,6,7,8-tetrahydrofolate + glycine + H2O = (6S)-5,6,7,8-tetrahydrofolate + L-serine. It participates in one-carbon metabolism; tetrahydrofolate interconversion. The protein operates within amino-acid biosynthesis; glycine biosynthesis; glycine from L-serine: step 1/1. Its function is as follows. Catalyzes the reversible interconversion of serine and glycine with tetrahydrofolate (THF) serving as the one-carbon carrier. This reaction serves as the major source of one-carbon groups required for the biosynthesis of purines, thymidylate, methionine, and other important biomolecules. Also exhibits THF-independent aldolase activity toward beta-hydroxyamino acids, producing glycine and aldehydes, via a retro-aldol mechanism. The protein is Serine hydroxymethyltransferase 1 of Vibrio parahaemolyticus serotype O3:K6 (strain RIMD 2210633).